The primary structure comprises 147 residues: MRVLLQRVSQASVSIDDTVHGQIGSGFLLLVGAQDQDTSEQIDYLVHKISHLRVFEDDAGKMNLSINDVGGQILSVSQFTLYANTKKGNRPSFVGAGDPQHASQIYDEFNQKLAATGLTVATGVFGADMQVALVNDGPVTIWFDTDA.

A Gly-cisPro motif, important for rejection of L-amino acids motif is present at residues 137-138; that stretch reads GP.

Belongs to the DTD family. In terms of assembly, homodimer.

The protein resides in the cytoplasm. The catalysed reaction is glycyl-tRNA(Ala) + H2O = tRNA(Ala) + glycine + H(+). It carries out the reaction a D-aminoacyl-tRNA + H2O = a tRNA + a D-alpha-amino acid + H(+). In terms of biological role, an aminoacyl-tRNA editing enzyme that deacylates mischarged D-aminoacyl-tRNAs. Also deacylates mischarged glycyl-tRNA(Ala), protecting cells against glycine mischarging by AlaRS. Acts via tRNA-based rather than protein-based catalysis; rejects L-amino acids rather than detecting D-amino acids in the active site. By recycling D-aminoacyl-tRNA to D-amino acids and free tRNA molecules, this enzyme counteracts the toxicity associated with the formation of D-aminoacyl-tRNA entities in vivo and helps enforce protein L-homochirality. The sequence is that of D-aminoacyl-tRNA deacylase from Levilactobacillus brevis (strain ATCC 367 / BCRC 12310 / CIP 105137 / JCM 1170 / LMG 11437 / NCIMB 947 / NCTC 947) (Lactobacillus brevis).